The primary structure comprises 269 residues: [LysW]-aminoadipate kinase (269 aa).

5-8 contributes to the ATP binding site; it reads KVGG. R64 lines the substrate pocket. ATP is bound at residue Y78. Residue N168 coordinates substrate.

The protein belongs to the acetylglutamate kinase family. LysZ subfamily.

Its subcellular location is the cytoplasm. The enzyme catalyses [amino-group carrier protein]-C-terminal-N-(1,4-dicarboxybutan-1-yl)-L-glutamine + ATP = [amino-group carrier protein]-C-terminal-N-(1-carboxy-5-phosphooxy-5-oxopentan-1-yl)-L-glutamine + ADP. The protein operates within amino-acid biosynthesis; L-lysine biosynthesis via AAA pathway; L-lysine from L-alpha-aminoadipate (Thermus route): step 2/5. Its function is as follows. Catalyzes the phosphorylation of LysW-gamma-alpha-aminoadipate. Does not phosphorylate N-acetyl-glutamate. The protein is [LysW]-aminoadipate kinase of Thermus thermophilus (strain ATCC BAA-163 / DSM 7039 / HB27).